A 317-amino-acid polypeptide reads, in one-letter code: MANNMTDTMTKPDINNDSTSLQQNGNKAGQSWFERPIPGIKQQLTAQLTAVETEPSTKCSSCHSIITNTALIFNCYVCPHCDHHLPMSARERLNWLLDQVEGELGQEFTAKDPLKFVDSKPYPSRMAEAQEKTKESEALIVLYGKLRNLDIVTCAFDFRFMGGSMGSVVGDRFVQAAEKALADRVPLVCFAASGGARMQEGLLSLMQMARTAAAIERLRIAGVPYIVVLTNPVYGGVTASLAMLGDIHLAEPKAMIGFAGKRVIEQTVRETLEEPFQRAEFLLEHGVVDEVVHRHQMIDTIYRLLAKLCSVPNVDVQ.

The interval 1–28 (MANNMTDTMTKPDINNDSTSLQQNGNKA) is disordered. A CoA carboxyltransferase N-terminal domain is found at 55-317 (PSTKCSSCHS…LCSVPNVDVQ (263 aa)). Zn(2+) contacts are provided by Cys-59, Cys-62, Cys-78, and Cys-81. The C4-type zinc-finger motif lies at 59–81 (CSSCHSIITNTALIFNCYVCPHC).

This sequence belongs to the AccD/PCCB family. In terms of assembly, acetyl-CoA carboxylase is a heterohexamer composed of biotin carboxyl carrier protein (AccB), biotin carboxylase (AccC) and two subunits each of ACCase subunit alpha (AccA) and ACCase subunit beta (AccD). It depends on Zn(2+) as a cofactor.

The protein resides in the cytoplasm. It carries out the reaction N(6)-carboxybiotinyl-L-lysyl-[protein] + acetyl-CoA = N(6)-biotinyl-L-lysyl-[protein] + malonyl-CoA. It functions in the pathway lipid metabolism; malonyl-CoA biosynthesis; malonyl-CoA from acetyl-CoA: step 1/1. Its function is as follows. Component of the acetyl coenzyme A carboxylase (ACC) complex. Biotin carboxylase (BC) catalyzes the carboxylation of biotin on its carrier protein (BCCP) and then the CO(2) group is transferred by the transcarboxylase to acetyl-CoA to form malonyl-CoA. This is Acetyl-coenzyme A carboxylase carboxyl transferase subunit beta from Psychrobacter cryohalolentis (strain ATCC BAA-1226 / DSM 17306 / VKM B-2378 / K5).